Reading from the N-terminus, the 221-residue chain is Probable lipoprotein CT_734 (221 aa).

A signal peptide spans 1–24 (MKKFIYKYSFGALLLLSGLSGLSS). The N-palmitoyl cysteine moiety is linked to residue Cys25. The S-diacylglycerol cysteine moiety is linked to residue Cys25.

This sequence belongs to the chlamydial CPn_0875/CT_734/TC_0107 family.

Its subcellular location is the cell membrane. The chain is Probable lipoprotein CT_734 from Chlamydia trachomatis serovar D (strain ATCC VR-885 / DSM 19411 / UW-3/Cx).